Consider the following 115-residue polypeptide: U3-lycotoxin-Ls1k (115 aa).

The signal sequence occupies residues 1–20 (MKFVLLFGVLVVTLFSYSSA). The propeptide occupies 21 to 44 (EMLDDFDQADEDELLSLIEKEEAR). 4 cysteine pairs are disulfide-bonded: Cys-48/Cys-63, Cys-55/Cys-72, Cys-62/Cys-87, and Cys-74/Cys-85.

Belongs to the neurotoxin 19 (CSTX) family. 01 subfamily. As to expression, expressed by the venom gland.

Its subcellular location is the secreted. This Lycosa singoriensis (Wolf spider) protein is U3-lycotoxin-Ls1k.